We begin with the raw amino-acid sequence, 246 residues long: tRNA (guanine-N(1)-)-methyltransferase (246 aa).

S-adenosyl-L-methionine contacts are provided by residues glycine 113 and 132–137 (LGDYVL).

The protein belongs to the RNA methyltransferase TrmD family. Homodimer.

It is found in the cytoplasm. The catalysed reaction is guanosine(37) in tRNA + S-adenosyl-L-methionine = N(1)-methylguanosine(37) in tRNA + S-adenosyl-L-homocysteine + H(+). Specifically methylates guanosine-37 in various tRNAs. The protein is tRNA (guanine-N(1)-)-methyltransferase of Lactiplantibacillus plantarum (strain ATCC BAA-793 / NCIMB 8826 / WCFS1) (Lactobacillus plantarum).